The sequence spans 706 residues: Polyribonucleotide nucleotidyltransferase (706 aa).

Asp486 and Asp492 together coordinate Mg(2+). The region spanning Pro552–Ile611 is the KH domain. The S1 motif domain maps to Gly621–Lys689.

This sequence belongs to the polyribonucleotide nucleotidyltransferase family. Requires Mg(2+) as cofactor.

Its subcellular location is the cytoplasm. The enzyme catalyses RNA(n+1) + phosphate = RNA(n) + a ribonucleoside 5'-diphosphate. Involved in mRNA degradation. Catalyzes the phosphorolysis of single-stranded polyribonucleotides processively in the 3'- to 5'-direction. The protein is Polyribonucleotide nucleotidyltransferase of Thiobacillus denitrificans (strain ATCC 25259 / T1).